Here is a 461-residue protein sequence, read N- to C-terminus: Integrator complex subunit 12 (461 aa).

A disordered region spans residues 42–131 (GIDSSYRPTQ…PETRSSPITV (90 aa)). Lys-68 is covalently cross-linked (Glycyl lysine isopeptide (Lys-Gly) (interchain with G-Cter in SUMO2)). A compositionally biased stretch (basic and acidic residues) spans 88 to 124 (TAEKIKKEAEKRPADKMKDVTEGIDVPKKPRLEKPET). Ser-127 is subject to Phosphoserine. The segment at 158 to 214 (GLACVVCRQMTVASGNQLVECQECHNLYHQDCHKPQVTDKEVNDPRLVWYCARCTRQ) adopts a PHD-type zinc-finger fold. Lys-253 is covalently cross-linked (Glycyl lysine isopeptide (Lys-Gly) (interchain with G-Cter in SUMO2)). Residues 302-328 (AGPSTAKLNSAAQNSSGKPAASSSNQK) show a composition bias toward polar residues. The segment at 302–443 (AGPSTAKLNS…PTSQESQLNA (142 aa)) is disordered. 2 stretches are compositionally biased toward low complexity: residues 348–357 (GSGNSTSPSV) and 381–436 (VSKV…GPTS).

It belongs to the Integrator subunit 12 family. As to quaternary structure, component of the Integrator complex, composed of core subunits INTS1, INTS2, INTS3, INTS4, INTS5, INTS6, INTS7, INTS8, INTS9/RC74, INTS10, INTS11/CPSF3L, INTS12, INTS13, INTS14 and INTS15. The core complex associates with protein phosphatase 2A subunits PPP2CA and PPP2R1A, to form the Integrator-PP2A (INTAC) complex. Post-translationally, dephosphorylated at Ser-127 by the PNUTS-PP1 complex, promoting RNA polymerase II transcription pause-release.

It localises to the nucleus. Its function is as follows. Component of the integrator complex, a multiprotein complex that terminates RNA polymerase II (Pol II) transcription in the promoter-proximal region of genes. The integrator complex provides a quality checkpoint during transcription elongation by driving premature transcription termination of transcripts that are unfavorably configured for transcriptional elongation: the complex terminates transcription by (1) catalyzing dephosphorylation of the C-terminal domain (CTD) of Pol II subunit POLR2A/RPB1 and SUPT5H/SPT5, (2) degrading the exiting nascent RNA transcript via endonuclease activity and (3) promoting the release of Pol II from bound DNA. The integrator complex is also involved in terminating the synthesis of non-coding Pol II transcripts, such as enhancer RNAs (eRNAs), small nuclear RNAs (snRNAs), telomerase RNAs and long non-coding RNAs (lncRNAs). Mediates recruitment of cytoplasmic dynein to the nuclear envelope, probably as component of the integrator complex. In Mus musculus (Mouse), this protein is Integrator complex subunit 12 (Ints12).